A 564-amino-acid polypeptide reads, in one-letter code: Bicarbonate transporter BicA (564 aa).

The Cytoplasmic portion of the chain corresponds to 1–11; it reads MQITNKIHFRN. The helical transmembrane segment at 12–37 threads the bilayer; it reads LQGDLFGGVTAAVIALPMALAFGIAS. The Periplasmic portion of the chain corresponds to 38–40; it reads GAG. A helical transmembrane segment spans residues 41 to 58; it reads ATAGLWGAVIVGFFAALF. The Cytoplasmic segment spans residues 59–70; that stretch reads GGTPTLISEPTG. Threonine 69 serves as a coordination point for hydrogencarbonate. Residues 71 to 86 traverse the membrane as a helical segment; the sequence is PMTVVQTAVIASLVAA. At 87–90 the chain is on the periplasmic side; sequence DPDN. A helical membrane pass occupies residues 91–112; sequence GLAMAFTVVMMAGLFQIAFGLL. Residues 113-122 lie on the Cytoplasmic side of the membrane; the sequence is KLGKYVTMMP. Residues 123–145 form a helical membrane-spanning segment; it reads YTVISGFMSGIGIILVILQLAPF. Residues 146-170 lie on the Periplasmic side of the membrane; that stretch reads LGQASPKGGVIGTLQALPNLVSNVR. A helical transmembrane segment spans residues 171–185; sequence PVETLLALMTVGIIW. Residues 186–196 lie on the Cytoplasmic side of the membrane; that stretch reads FMPSRWKKFAP. The helical transmembrane segment at 197-211 threads the bilayer; sequence PQLVALVLGTIISIT. The Periplasmic portion of the chain corresponds to 212–240; sequence LFGDLDIRRIGEIQAGLPALQLPVFQADQ. A helical membrane pass occupies residues 241–269; that stretch reads LQRMLIDAAVLGMLGCIDALLTSVVADSL. Residues aspartate 258 and threonine 262 each coordinate Na(+). Residues 270–275 lie on the Cytoplasmic side of the membrane; the sequence is TRTEHN. A helical membrane pass occupies residues 276 to 292; sequence SNKELVGQGIGNVMSGL. Topologically, residues 293–302 are periplasmic; that stretch reads FGGLGGAGAT. Residue glycine 300 participates in Na(+) binding. Alanine 301 is a hydrogencarbonate binding site. Threonine 302 is a Na(+) binding site. Residues 303–312 traverse the membrane as a helical segment; that stretch reads MGTVVNIQSG. The Cytoplasmic segment spans residues 313 to 315; the sequence is GRT. A helical transmembrane segment spans residues 316 to 338; the sequence is ALSGLIRAMVLLVVILGAAKLAA. The Periplasmic segment spans residues 339 to 341; sequence TIP. The chain crosses the membrane as a helical span at residues 342 to 357; the sequence is LAVLAGIAFKVGVDII. At 358-369 the chain is on the cytoplasmic side; it reads DWGFLKRAHHVS. Residues 370–390 traverse the membrane as a helical segment; it reads IKGALIMYAVIVLTVLVDLIA. Topologically, residues 391–392 are periplasmic; sequence AV. Residues 393–405 traverse the membrane as a helical segment; that stretch reads GIGVFIANILTID. The Cytoplasmic portion of the chain corresponds to 406-564; sequence RMSALQSKAV…PSSSSVQTTY (159 aa). The STAS domain occupies 432–542; that stretch reads KRWLDEGNGR…DDRSEALKDA (111 aa).

It belongs to the SLC26A/SulP transporter (TC 2.A.53) family. As to quaternary structure, forms homodimers through the STAS cytoplasmic domain.

It localises to the cell inner membrane. Its function is as follows. Low affinity, high-flux Na(+)-dependent bicarbonate transporter. Involved in carbone dioxide-concentrating mechanisms (CCMs) that accumulate CO(2) and improve photosynthetic carbon fixation. The polypeptide is Bicarbonate transporter BicA (Synechocystis sp. (strain ATCC 27184 / PCC 6803 / Kazusa)).